Here is a 468-residue protein sequence, read N- to C-terminus: ATP synthase subunit beta (468 aa).

An ATP-binding site is contributed by 155–162 (GGAGVGKT).

This sequence belongs to the ATPase alpha/beta chains family. F-type ATPases have 2 components, CF(1) - the catalytic core - and CF(0) - the membrane proton channel. CF(1) has five subunits: alpha(3), beta(3), gamma(1), delta(1), epsilon(1). CF(0) has three main subunits: a(1), b(2) and c(9-12). The alpha and beta chains form an alternating ring which encloses part of the gamma chain. CF(1) is attached to CF(0) by a central stalk formed by the gamma and epsilon chains, while a peripheral stalk is formed by the delta and b chains.

The protein resides in the cell membrane. The enzyme catalyses ATP + H2O + 4 H(+)(in) = ADP + phosphate + 5 H(+)(out). Its function is as follows. Produces ATP from ADP in the presence of a proton gradient across the membrane. The catalytic sites are hosted primarily by the beta subunits. This chain is ATP synthase subunit beta, found in Streptococcus pyogenes serotype M1.